The following is a 247-amino-acid chain: Phosphoribosylaminoimidazole-succinocarboxamide synthase (247 aa).

Belongs to the SAICAR synthetase family.

It carries out the reaction 5-amino-1-(5-phospho-D-ribosyl)imidazole-4-carboxylate + L-aspartate + ATP = (2S)-2-[5-amino-1-(5-phospho-beta-D-ribosyl)imidazole-4-carboxamido]succinate + ADP + phosphate + 2 H(+). The protein operates within purine metabolism; IMP biosynthesis via de novo pathway; 5-amino-1-(5-phospho-D-ribosyl)imidazole-4-carboxamide from 5-amino-1-(5-phospho-D-ribosyl)imidazole-4-carboxylate: step 1/2. The protein is Phosphoribosylaminoimidazole-succinocarboxamide synthase of Herpetosiphon aurantiacus (strain ATCC 23779 / DSM 785 / 114-95).